Here is a 270-residue protein sequence, read N- to C-terminus: Formamidopyrimidine-DNA glycosylase (270 aa).

Pro-2 (schiff-base intermediate with DNA) is an active-site residue. The Proton donor role is filled by Glu-3. The active-site Proton donor; for beta-elimination activity is the Lys-57. 3 residues coordinate DNA: His-90, Arg-109, and Lys-150. The segment at 235-269 adopts an FPG-type zinc-finger fold; the sequence is QIYGKKGCPCPKCGQKIESFTVGQRNSYVCLHCQK. Catalysis depends on Arg-259, which acts as the Proton donor; for delta-elimination activity.

The protein belongs to the FPG family. In terms of assembly, monomer. It depends on Zn(2+) as a cofactor.

It catalyses the reaction Hydrolysis of DNA containing ring-opened 7-methylguanine residues, releasing 2,6-diamino-4-hydroxy-5-(N-methyl)formamidopyrimidine.. The enzyme catalyses 2'-deoxyribonucleotide-(2'-deoxyribose 5'-phosphate)-2'-deoxyribonucleotide-DNA = a 3'-end 2'-deoxyribonucleotide-(2,3-dehydro-2,3-deoxyribose 5'-phosphate)-DNA + a 5'-end 5'-phospho-2'-deoxyribonucleoside-DNA + H(+). Involved in base excision repair of DNA damaged by oxidation or by mutagenic agents. Acts as a DNA glycosylase that recognizes and removes damaged bases. Has a preference for oxidized purines, such as 7,8-dihydro-8-oxoguanine (8-oxoG). Has AP (apurinic/apyrimidinic) lyase activity and introduces nicks in the DNA strand. Cleaves the DNA backbone by beta-delta elimination to generate a single-strand break at the site of the removed base with both 3'- and 5'-phosphates. This Actinobacillus succinogenes (strain ATCC 55618 / DSM 22257 / CCUG 43843 / 130Z) protein is Formamidopyrimidine-DNA glycosylase.